A 390-amino-acid chain; its full sequence is Flap endonuclease 1-1 (390 aa).

Positions 1-108 are N-domain; it reads MGIHQLMQFL…GELARRKKLK (108 aa). Asp-34 contacts Mg(2+). Arg-74 contributes to the DNA binding site. Mg(2+) contacts are provided by Asp-90, Glu-162, Glu-164, Asp-183, and Asp-185. Positions 126-254 are I-domain; the sequence is QALLQHQRTT…GTAYKLIKEF (129 aa). Residue Glu-162 coordinates DNA. DNA contacts are provided by Gly-232 and Asp-234. A Mg(2+)-binding site is contributed by Asp-234. Residues 348–356 form an interaction with PCNA region; it reads FQSRLENFF. The disordered stretch occupies residues 359–390; the sequence is TTKIIHPNNSKAKGKANKKNEQTQKSGGKKKI.

Belongs to the XPG/RAD2 endonuclease family. FEN1 subfamily. Interacts with PCNA. Three molecules of FEN1 bind to one PCNA trimer with each molecule binding to one PCNA monomer. PCNA stimulates the nuclease activity without altering cleavage specificity. The cofactor is Mg(2+). Post-translationally, phosphorylated. Phosphorylation upon DNA damage induces relocalization to the nuclear plasma.

The protein localises to the nucleus. Its subcellular location is the nucleolus. The protein resides in the nucleoplasm. It is found in the mitochondrion. Structure-specific nuclease with 5'-flap endonuclease and 5'-3' exonuclease activities involved in DNA replication and repair. During DNA replication, cleaves the 5'-overhanging flap structure that is generated by displacement synthesis when DNA polymerase encounters the 5'-end of a downstream Okazaki fragment. It enters the flap from the 5'-end and then tracks to cleave the flap base, leaving a nick for ligation. Also involved in the long patch base excision repair (LP-BER) pathway, by cleaving within the apurinic/apyrimidinic (AP) site-terminated flap. Acts as a genome stabilization factor that prevents flaps from equilibrating into structures that lead to duplications and deletions. Also possesses 5'-3' exonuclease activity on nicked or gapped double-stranded DNA, and exhibits RNase H activity. Also involved in replication and repair of rDNA and in repairing mitochondrial DNA. The chain is Flap endonuclease 1-1 from Paramecium tetraurelia.